The sequence spans 309 residues: L-aminoadipate-semialdehyde dehydrogenase-phosphopantetheinyl transferase (309 aa).

Residues arginine 47, 86–91 (RTAKGK), and 108–111 (NISH) each bind CoA. Residues aspartate 129 and glutamate 181 each contribute to the Mg(2+) site. 181 to 185 (ESFIK) provides a ligand contact to CoA. Serine 258 carries the phosphoserine modification.

Belongs to the P-Pant transferase superfamily. AcpS family. As to quaternary structure, monomer. Mg(2+) is required as a cofactor. In terms of tissue distribution, detected in heart, skeletal muscle, placenta, testis, brain, pancreas, liver and kidney.

It localises to the cytoplasm. The protein localises to the cytosol. The catalysed reaction is apo-[ACP] + CoA = holo-[ACP] + adenosine 3',5'-bisphosphate + H(+). The enzyme catalyses apo-[ACP] + acetyl-CoA = acetyl-[ACP] + adenosine 3',5'-bisphosphate + H(+). Functionally, catalyzes the post-translational modification of target proteins by phosphopantetheine. Can transfer the 4'-phosphopantetheine moiety from coenzyme A, regardless of whether the CoA is presented in the free thiol form or as an acetyl thioester, to a serine residue of a broad range of acceptors including the acyl carrier domain of FASN. This is L-aminoadipate-semialdehyde dehydrogenase-phosphopantetheinyl transferase (AASDHPPT) from Homo sapiens (Human).